Reading from the N-terminus, the 936-residue chain is Coiled-coil domain-containing protein 191 (936 aa).

Coiled-coil stretches lie at residues 189–270 and 364–440; these read RLTM…VKAA and RDYT…LQAA. A disordered region spans residues 495–541; the sequence is LGRTTTGNLQGSLQNVSLSAPGNKQHKTLGAEPSQQPGSNETLRTTS. 2 stretches are compositionally biased toward polar residues: residues 497-516 and 527-541; these read RTTTGNLQGSLQNVSLSAPG and PSQQPGSNETLRTTS. Residues 554 to 592 are a coiled coil; it reads NRHVFQQQLIEKQKKKLQEQQKTILELKKNLQLAEAQWA. Disordered stretches follow at residues 607 to 656 and 691 to 714; these read LSKP…TPHP and KAQEEERQKREAEEKEAQLERKRE. Residues 662–739 are a coiled coil; the sequence is EERAIQRAEC…IKRNQQLEAI (78 aa).

The protein is Coiled-coil domain-containing protein 191 (CCDC191) of Homo sapiens (Human).